Reading from the N-terminus, the 1096-residue chain is Protein EMBRYONIC FLOWER 1 (1096 aa).

Disordered stretches follow at residues 155–189 (KARGRPMGASNVRSKSRKLVSPEQVGNNRSKEKLN), 274–296 (KTSGGSNIRKEESALKKESVRGR), 315–348 (GATSENASKSCDSDQGNSESTDSGFDRTPFKGKQ), 366–420 (ETSQ…KKPV), 563–612 (LSRV…DIPM), 629–651 (DKEEDVSNKQPSQETAHKSKNAL), 1007–1032 (DKEKKQKRKAESCNNNASAGPVKNSS), and 1070–1096 (FKKKPAVCKQDAMKQTKKPVCPPTQNA). Short sequence motifs (nuclear localization signal) lie at residues 170-177 (SRKLVSPE) and 281-288 (IRKEESAL). Positions 281-294 (IRKEESALKKESVR) are enriched in basic and acidic residues. Polar residues predominate over residues 315–337 (GATSENASKSCDSDQGNSESTDS). Positions 337–617 (SGFDRTPFKG…DDIPMEIVEL (281 aa)) are DNA-binding. Positions 371 to 381 (GIKEHDADPSK) are enriched in basic and acidic residues. Residues 382–394 (RSTPAHSLFTGND) show a composition bias toward polar residues. Residues 572–601 (SGADRKGKTVMVQEHHGAPRSQSHDRKETT) are compositionally biased toward basic and acidic residues. The segment at 866–1096 (LDPRLRSTTP…KPVCPPTQNA (231 aa)) is DNA-binding. Residues 1018-1032 (SCNNNASAGPVKNSS) show a composition bias toward polar residues. The Nuclear localization signal 3 motif lies at 1071 to 1078 (KKKPAVCK).

As to quaternary structure, interacts with MSI1. As to expression, expressed in mature embryo, root tips, cotyledons, leaves, stems, shoot apex, and flower clusters, with highest levels in flowers. The presence in the shoot apical meristem (SAM) is required to maintain vegetative development and prevent early flowering.

The protein localises to the nucleus. Transcription repressor that regulates phase transition during shoot, flower and seeds development. Controls leaves development, shoot architecture and flowering by delaying both the vegetative to reproductive transition and flower initiation. Participates in polycomb group (PcG) protein complex-mediated (including EMF2) silencing of the flower homeotic genes AGAMOUS (AG), PISTILLATA (PI), and APETALA3 (AP3), as well as of some regulatory genes such as ABSCISIC ACID INSENSITIVE3 (ABI3), LONG VEGETATIVE PHASE1 (LOV1), and FLOWERING LOCUS C (FLC) during vegetative development. Required for histone methylation or for maintaining a stable histone methylation (e.g. H3K27me3) pattern of repressed target genes (including genes involved in salt stress response and flower development); this repression is counteracted by ULT1. Can bind non specifically DNA (both double- and single-stranded) and RNA. This Arabidopsis thaliana (Mouse-ear cress) protein is Protein EMBRYONIC FLOWER 1.